The primary structure comprises 393 residues: Decapping nuclease dom-3 (393 aa).

Positions 1-37 are disordered; that stretch reads MSHYGGNPRGNSSHQFGRKDFQQSDSKHIPKITGQPL. Basic and acidic residues predominate over residues 17–28; sequence GRKDFQQSDSKH. Residues arginine 74, glutamate 113, and 144–146 each bind substrate; that span reads WRG. Residues glutamate 205, glutamate 257, aspartate 259, glutamate 269, and leucine 270 each coordinate Mg(2+). Glutamate 257 is a binding site for substrate. Substrate is bound by residues lysine 271 and glutamine 293.

It belongs to the DXO/Dom3Z family. The cofactor is Mg(2+).

It carries out the reaction a 5'-end NAD(+)-phospho-ribonucleoside in mRNA + H2O = a 5'-end phospho-ribonucleoside in mRNA + NAD(+) + H(+). The enzyme catalyses a 5'-end (N(7)-methyl 5'-triphosphoguanosine)-ribonucleoside-ribonucleotide in mRNA + H2O = a (N(7)-methyl 5'-triphosphoguanosine)-nucleoside + a 5'-end phospho-ribonucleoside in mRNA + H(+). It catalyses the reaction a 5'-end triphospho-ribonucleoside in mRNA + H2O = a 5'-end phospho-ribonucleoside in mRNA + diphosphate + H(+). Its function is as follows. Decapping enzyme for NAD-capped RNAs: specifically hydrolyzes the nicotinamide adenine dinucleotide (NAD) cap from a subset of RNAs by removing the entire NAD moiety from the 5'-end of an NAD-capped RNA. The NAD-cap is present at the 5'-end of some RNAs and snoRNAs. In contrast to the canonical 5'-end N7 methylguanosine (m7G) cap, the NAD cap promotes mRNA decay. Also acts as a non-canonical decapping enzyme that removes the entire cap structure of m7G capped or incompletely capped RNAs and mediates their subsequent degradation. Specifically degrades pre-mRNAs with a defective 5'-end m7G cap and is part of a pre-mRNA capping quality control. Also possesses RNA 5'-pyrophosphohydrolase activity by hydrolyzing the 5'-end triphosphate to release pyrophosphates. This Caenorhabditis elegans protein is Decapping nuclease dom-3.